A 424-amino-acid chain; its full sequence is Tyrosine--tRNA ligase (424 aa).

L-tyrosine is bound at residue Tyr-37. The short motif at 42 to 51 is the 'HIGH' region element; it reads PTADSLHLGH. N6-acetyllysine is present on Lys-144. L-tyrosine contacts are provided by Tyr-175 and Gln-179. The 'KMSKS' region signature appears at 235–239; sequence KFGKT. Residue Lys-238 participates in ATP binding. The S4 RNA-binding domain maps to 357–414; that stretch reads ADLMQALVDSELQPSRGQARKTIASNAVTINGEKQSDPEYFFKEEDRLFGRFTLLRRG.

This sequence belongs to the class-I aminoacyl-tRNA synthetase family. TyrS type 1 subfamily. In terms of assembly, homodimer.

It is found in the cytoplasm. The enzyme catalyses tRNA(Tyr) + L-tyrosine + ATP = L-tyrosyl-tRNA(Tyr) + AMP + diphosphate + H(+). Its function is as follows. Catalyzes the attachment of tyrosine to tRNA(Tyr) in a two-step reaction: tyrosine is first activated by ATP to form Tyr-AMP and then transferred to the acceptor end of tRNA(Tyr). This is Tyrosine--tRNA ligase from Escherichia fergusonii (strain ATCC 35469 / DSM 13698 / CCUG 18766 / IAM 14443 / JCM 21226 / LMG 7866 / NBRC 102419 / NCTC 12128 / CDC 0568-73).